We begin with the raw amino-acid sequence, 313 residues long: Ribosomal RNA small subunit methyltransferase H (313 aa).

S-adenosyl-L-methionine-binding positions include 35 to 37, Asp55, Phe80, Asp102, and Gln109; that span reads GGH.

This sequence belongs to the methyltransferase superfamily. RsmH family.

It is found in the cytoplasm. The enzyme catalyses cytidine(1402) in 16S rRNA + S-adenosyl-L-methionine = N(4)-methylcytidine(1402) in 16S rRNA + S-adenosyl-L-homocysteine + H(+). In terms of biological role, specifically methylates the N4 position of cytidine in position 1402 (C1402) of 16S rRNA. This chain is Ribosomal RNA small subunit methyltransferase H, found in Shewanella baltica (strain OS223).